A 204-amino-acid chain; its full sequence is tRNA (pseudouridine(54)-N(1))-methyltransferase (204 aa).

S-adenosyl-L-methionine-binding positions include Leu130, Gly157, 180-185 (LSPLEL), and Cys190.

This sequence belongs to the methyltransferase superfamily. TrmY family. Homodimer.

It localises to the cytoplasm. The enzyme catalyses pseudouridine(54) in tRNA + S-adenosyl-L-methionine = N(1)-methylpseudouridine(54) in tRNA + S-adenosyl-L-homocysteine + H(+). Its function is as follows. Specifically catalyzes the N1-methylation of pseudouridine at position 54 (Psi54) in tRNAs. The protein is tRNA (pseudouridine(54)-N(1))-methyltransferase of Methanococcus aeolicus (strain ATCC BAA-1280 / DSM 17508 / OCM 812 / Nankai-3).